A 255-amino-acid chain; its full sequence is NAD-dependent protein deacylase (255 aa).

Positions 1 to 253 constitute a Deacetylase sirtuin-type domain; the sequence is MIEEAPRIIA…VKVKRCLENK (253 aa). Residue 20–39 participates in NAD(+) binding; it reads GAGVSAESGIPTFRDRGGLW. Residues tyrosine 64 and arginine 67 each coordinate substrate. 98–101 serves as a coordination point for NAD(+); the sequence is QNID. Histidine 116 acts as the Proton acceptor in catalysis. 4 residues coordinate Zn(2+): cysteine 124, cysteine 127, cysteine 151, and cysteine 154. NAD(+) contacts are provided by residues 191–193, 217–219, and alanine 235; these read GTS and NTK.

This sequence belongs to the sirtuin family. Class III subfamily. Zn(2+) is required as a cofactor.

The protein localises to the cytoplasm. The enzyme catalyses N(6)-acetyl-L-lysyl-[protein] + NAD(+) + H2O = 2''-O-acetyl-ADP-D-ribose + nicotinamide + L-lysyl-[protein]. It catalyses the reaction N(6)-succinyl-L-lysyl-[protein] + NAD(+) + H2O = 2''-O-succinyl-ADP-D-ribose + nicotinamide + L-lysyl-[protein]. Its function is as follows. NAD-dependent lysine deacetylase and desuccinylase that specifically removes acetyl and succinyl groups on target proteins. Modulates the activities of several proteins which are inactive in their acylated form. Deacetylates the N-terminal lysine residue of Alba, the major archaeal chromatin protein and that, in turn, increases Alba's DNA binding affinity, thereby repressing transcription. This Thermococcus sibiricus (strain DSM 12597 / MM 739) protein is NAD-dependent protein deacylase.